A 96-amino-acid polypeptide reads, in one-letter code: Protein RnfH (96 aa).

It belongs to the UPF0125 (RnfH) family.

The polypeptide is Protein RnfH (Escherichia coli O127:H6 (strain E2348/69 / EPEC)).